The following is a 63-amino-acid chain: Small ribosomal subunit protein uS14 (63 aa).

The Zn(2+) site is built by cysteine 26, cysteine 29, cysteine 42, and cysteine 45.

It belongs to the universal ribosomal protein uS14 family. Zinc-binding uS14 subfamily. Part of the 30S ribosomal subunit. Contacts proteins S3 and S10. Zn(2+) is required as a cofactor.

Functionally, binds 16S rRNA, required for the assembly of 30S particles and may also be responsible for determining the conformation of the 16S rRNA at the A site. The protein is Small ribosomal subunit protein uS14 of Gloeobacter violaceus (strain ATCC 29082 / PCC 7421).